Consider the following 317-residue polypeptide: Probable pathogenesis-related protein CaO19.6200 (317 aa).

The first 23 residues, 1–23 (MKFLQSFPVILAVFSFAANLVSS), serve as a signal peptide directing secretion. Disordered stretches follow at residues 52-116 (RLET…TTVT) and 155-179 (PSAPKPQPQPQPQENNSGTNDDSQL). Positions 58–76 (PTSTTTTIVIPSSKPSSPE) are enriched in low complexity. 2 stretches are compositionally biased toward polar residues: residues 84-116 (QPMFQSPSPVQITPSTTSINNAPSPTKPETTVT) and 168-179 (ENNSGTNDDSQL). A glycan (N-linked (GlcNAc...) asparagine) is linked at Asn169. In terms of domain architecture, SCP spans 187–297 (LEAHNIKRAS…GWGLYIICNY (111 aa)).

It belongs to the CRISP family.

Its subcellular location is the secreted. In terms of biological role, secreted protein that acts as a virulence factor during infections. This is Probable pathogenesis-related protein CaO19.6200 from Candida albicans (strain SC5314 / ATCC MYA-2876) (Yeast).